Reading from the N-terminus, the 1054-residue chain is MEEVDRLVTASITSIVSALGGCDLASEDASYVLGEEALACLKDVKQWLRAFDEKLGRSDVAKCIASTTLVVSDIPSILSTWNTQSEAGQASKKMDRVALACLEILVPLLWPIEINDETPDNVVASADLLRQAQIRYKRALLGHPSKSILKAVVRLCIPSVAKSKADRDQRDIGIMKLVVFFIRNMLAIDPMEANGKTDDINRSAILEAFENQGVLDLMLTLGSCTGYDIVGVDLPLLDSLYQMVKGLDVVEIFETSPNEPDNQLKNLLDTERRNKPVGSSRHSRFASTMTVLHNGSKISVTGPTASIEKSLEKFDKSKQPGRRLTKPTTGVWEVPVFVGHSAKRYIRVFSELFNDSAFNPLMQTVRKALEQEDDIGPAFKHYLVVLKWFLGVEMHRKTPDFGLIASVVNQEAFIIIMRSIRQGVQAKNWTMVKTAMDSFKTTLVVVNLMSDEEVASNIKARLFYEEEYLTMLADLTRRWALPLTFLQSAVDMTHTLIKTLESFTKANTTLYVRRRRLRAQKKADDTGNVEDLESLPGEEHESAIESRERKFNFSSFESRYFHEDTFTTYRMVLSSFQQLDNCYLGWCLKFLDRAFNKRKCRVMLFRLDYLQLFRTMVKELNSSNPWRKPFEHFFKKYMRQMIPMMKERPCLMVEVIFAKIPGTLHYLESGEEKPVRELKERTSKFVYEFTEGDDIPEERKVCILVASLLDEEKKQLVEWFIDELDSLLRARTGDTQVLNPPKATDELNVPKSIDEDDKFRLLMELVGFTLSRIPKSSVGCKTLCSLPGEVSRADIERATGWLKQWYSTPVDFEPFNKIKRVRRDDKERRGAGGDKEGSQDAEEDDELPLFLASDSEDDIENINDEMFAPVPKEKQQKTKQKLKRKGTSKSTREREKQRDYTAKTTIDIPMSYKSADFIGASDDDSDDERDRKFFEKENELREELRKAEPTINLEEKVDKAFKRQYAYVSDGEEEPLSETESHKQYREKVDEDRDDLSHMAERENRQYDFGDEGHDSDNLEIIDDDSKSPVAAEGTTSSQPIRKRRIVDDSDDDE.

4 disordered regions span residues 522 to 543 (KADD…HESA), 823 to 846 (RDDK…EDDE), 865 to 953 (EMFA…TINL), and 968 to 1054 (VSDG…DDDE). Basic and acidic residues predominate over residues 823–838 (RDDKERRGAGGDKEGS). A compositionally biased stretch (basic residues) spans 877–887 (KTKQKLKRKGT). Composition is skewed to basic and acidic residues over residues 890–901 (STREREKQRDYT), 928–953 (ERDR…TINL), and 979–1017 (TESH…HDSD).

It belongs to the timeless family. In terms of assembly, component of the fork protection complex (FPC) consisting of TOF1 and CSM3.

The protein resides in the nucleus. Forms a fork protection complex (FPC) with CSM3 and which is required for chromosome segregation during meiosis and DNA damage repair. FPC coordinates leading and lagging strand synthesis and moves with the replication fork. FPC stabilizes replication forks in a configuration that is recognized by replication checkpoint sensors. The sequence is that of Topoisomerase 1-associated factor 1 (TOF1) from Yarrowia lipolytica (strain CLIB 122 / E 150) (Yeast).